We begin with the raw amino-acid sequence, 161 residues long: Cystatin cpi-2 (161 aa).

An N-terminal signal peptide occupies residues methionine 1 to alanine 25. Positions serine 76–aspartate 78 match the Important for interaction with host LGMN motif. Residue asparagine 89 is glycosylated (N-linked (GlcNAc...) asparagine). The short motif at glutamine 93 to glycine 97 is the Secondary area of contact element. Cysteines 111 and 124 form a disulfide.

It belongs to the cystatin family.

In terms of biological role, cysteine protease inhibitor which inhibits members of the peptidase C1 family. Also acts as an asparaginyl endopeptidase inhibitor. In the human host, inhibits CTSL/cathepsin L, CTSS/cathepsin S, CTSB/cathepsin B and asparaginyl endopeptidase LGMN/AEP which may cause defects in both antigen and MHC class II invariant chain CD74/Ii processing. This chain is Cystatin cpi-2, found in Brugia malayi (Filarial nematode worm).